The primary structure comprises 413 residues: Putative competence-damage inducible protein (413 aa).

It belongs to the CinA family.

In Pediococcus pentosaceus (strain ATCC 25745 / CCUG 21536 / LMG 10740 / 183-1w), this protein is Putative competence-damage inducible protein.